The primary structure comprises 395 residues: Elongation factor Tu (395 aa).

Positions 10-204 (KPHVNIGTIG…AVDEYIPTPQ (195 aa)) constitute a tr-type G domain. Residues 19 to 26 (GHVDHGKT) form a G1 region. 19 to 26 (GHVDHGKT) lines the GTP pocket. Thr-26 provides a ligand contact to Mg(2+). Residues 60 to 64 (GITIS) form a G2 region. Residues 81–84 (DCPG) are G3. GTP contacts are provided by residues 81–85 (DCPGH) and 136–139 (NKCD). Residues 136 to 139 (NKCD) form a G4 region. The G5 stretch occupies residues 174–176 (SAL).

Belongs to the TRAFAC class translation factor GTPase superfamily. Classic translation factor GTPase family. EF-Tu/EF-1A subfamily. In terms of assembly, monomer.

It is found in the cytoplasm. The enzyme catalyses GTP + H2O = GDP + phosphate + H(+). GTP hydrolase that promotes the GTP-dependent binding of aminoacyl-tRNA to the A-site of ribosomes during protein biosynthesis. The sequence is that of Elongation factor Tu from Anoxybacillus flavithermus (strain DSM 21510 / WK1).